Consider the following 477-residue polypeptide: UDP-N-acetylmuramate--L-alanine ligase (477 aa).

Residue 112–118 (GAHGKTT) coordinates ATP.

Belongs to the MurCDEF family.

The protein localises to the cytoplasm. It carries out the reaction UDP-N-acetyl-alpha-D-muramate + L-alanine + ATP = UDP-N-acetyl-alpha-D-muramoyl-L-alanine + ADP + phosphate + H(+). Its pathway is cell wall biogenesis; peptidoglycan biosynthesis. Cell wall formation. The polypeptide is UDP-N-acetylmuramate--L-alanine ligase (Acidovorax ebreus (strain TPSY) (Diaphorobacter sp. (strain TPSY))).